The following is a 318-amino-acid chain: Cuticle collagen dpy-7 (318 aa).

Triple-helical region regions lie at residues 101 to 130, 147 to 206, 209 to 235, and 240 to 278; these read GPIG…DGLD, GPPG…PGDD, GGTG…NGLP, and GPPG…PGGH. A disordered region spans residues 101–318; that stretch reads GPIGPPGVSG…GYSGGGYGKK (218 aa). Residues 187–204 are compositionally biased toward low complexity; it reads PQGEPGEQGEPGIKGPPG. 2 stretches are compositionally biased toward pro residues: residues 216 to 228 and 250 to 268; these read PPGP…PKGP and PPGP…PFGP. Over residues 309-318 the composition is skewed to gly residues; it reads GYSGGGYGKK.

This sequence belongs to the cuticular collagen family. In terms of assembly, collagen polypeptide chains are complexed within the cuticle by disulfide bonds and other types of covalent cross-links.

Its function is as follows. Nematode cuticles are composed largely of collagen-like proteins. The cuticle functions both as an exoskeleton and as a barrier to protect the worm from its environment. Mutations in dpy-7 affects the body shape. The chain is Cuticle collagen dpy-7 (dpy-7) from Caenorhabditis elegans.